The following is a 550-amino-acid chain: Glutamyl-tRNA(Gln) amidotransferase subunit A, mitochondrial (550 aa).

Active-site charge relay system residues include Lys79 and Ser171. Ser195 acts as the Acyl-ester intermediate in catalysis. Residues 371–390 form a disordered region; sequence EKDENKVDNDNDDDDDVDEN.

Belongs to the amidase family. GatA subfamily. In terms of assembly, subunit of the heterotrimeric GatCAB amidotransferase (AdT) complex, composed of A, B and C subunits.

It localises to the mitochondrion. It catalyses the reaction L-glutamyl-tRNA(Gln) + L-glutamine + ATP + H2O = L-glutaminyl-tRNA(Gln) + L-glutamate + ADP + phosphate + H(+). In terms of biological role, allows the formation of correctly charged Gln-tRNA(Gln) through the transamidation of misacylated Glu-tRNA(Gln) in the mitochondria. The reaction takes place in the presence of glutamine and ATP through an activated gamma-phospho-Glu-tRNA(Gln). This chain is Glutamyl-tRNA(Gln) amidotransferase subunit A, mitochondrial, found in Dictyostelium discoideum (Social amoeba).